The primary structure comprises 113 residues: uncharacterized protein (113 aa).

It belongs to the Lactobacillus delbrueckii bacteriophages ORF5 protein family.

This is an uncharacterized protein from Lactobacillus delbrueckii (Lactococcus delbrueckii bacteriophage mv4).